A 179-amino-acid chain; its full sequence is Large ribosomal subunit protein uL6 (179 aa).

This sequence belongs to the universal ribosomal protein uL6 family. In terms of assembly, part of the 50S ribosomal subunit.

In terms of biological role, this protein binds to the 23S rRNA, and is important in its secondary structure. It is located near the subunit interface in the base of the L7/L12 stalk, and near the tRNA binding site of the peptidyltransferase center. This is Large ribosomal subunit protein uL6 from Mycolicibacterium gilvum (strain PYR-GCK) (Mycobacterium gilvum (strain PYR-GCK)).